A 624-amino-acid polypeptide reads, in one-letter code: Chromosomal replication initiator protein DnaA (624 aa).

Residues 1 to 99 form a domain I, interacts with DnaA modulators region; sequence MADVPADLAA…SAGEPPSPPA (99 aa). Residues 88-284 form a disordered region; it reads DDSAGEPPSP…APGPGEPHAR (197 aa). A domain II region spans residues 100–283; it reads PPMHQSHQSQ…PAPGPGEPHA (184 aa). The span at 102–112 shows a compositional bias: low complexity; the sequence is MHQSHQSQQGH. Basic and acidic residues-rich tracts occupy residues 118–141 and 176–206; these read QRDD…DGMP and GYQD…REQA. Positions 250–264 are enriched in gly residues; it reads PRQGGHGPGRTGGSV. The segment at 284-500 is domain III, AAA+ region; it reads RLNPKYLFDT…GALIRVTAFA (217 aa). ATP is bound by residues Gly-328, Gly-330, Lys-331, and Thr-332. Positions 501–624 are domain IV, binds dsDNA; the sequence is SLNRQPVDLG…TELTNRIKNG (124 aa).

The protein belongs to the DnaA family. As to quaternary structure, oligomerizes as a right-handed, spiral filament on DNA at oriC.

The protein localises to the cytoplasm. Plays an essential role in the initiation and regulation of chromosomal replication. ATP-DnaA binds to the origin of replication (oriC) to initiate formation of the DNA replication initiation complex once per cell cycle. Binds the DnaA box (a 9 base pair repeat at the origin) and separates the double-stranded (ds)DNA. Forms a right-handed helical filament on oriC DNA; dsDNA binds to the exterior of the filament while single-stranded (ss)DNA is stabiized in the filament's interior. The ATP-DnaA-oriC complex binds and stabilizes one strand of the AT-rich DNA unwinding element (DUE), permitting loading of DNA polymerase. After initiation quickly degrades to an ADP-DnaA complex that is not apt for DNA replication. Binds acidic phospholipids. Its function is as follows. The DnaA box consensus is 5'-(T/C)(T/C)(G/AC)TCCACA-3'. The chain is Chromosomal replication initiator protein DnaA from Streptomyces anulatus (Streptomyces chrysomallus).